The following is an 88-amino-acid chain: Small ribosomal subunit protein bS16 (88 aa).

Belongs to the bacterial ribosomal protein bS16 family.

This is Small ribosomal subunit protein bS16 from Thermus aquaticus.